Consider the following 452-residue polypeptide: Cysteine--tRNA ligase (452 aa).

Residue Cys35 coordinates Zn(2+). The 'HIGH' region signature appears at 37–47; that stretch reads PTVYDRAHLGN. Positions 215, 240, and 244 each coordinate Zn(2+). The short motif at 273-277 is the 'KMSKS' region element; that stretch reads KMSKS. Lys276 lines the ATP pocket.

It belongs to the class-I aminoacyl-tRNA synthetase family. As to quaternary structure, monomer. Zn(2+) is required as a cofactor.

It localises to the cytoplasm. It carries out the reaction tRNA(Cys) + L-cysteine + ATP = L-cysteinyl-tRNA(Cys) + AMP + diphosphate. In Gluconobacter oxydans (strain 621H) (Gluconobacter suboxydans), this protein is Cysteine--tRNA ligase.